Reading from the N-terminus, the 881-residue chain is DNA mismatch repair protein MutS (881 aa).

605 to 612 (GPNMSGKS) is an ATP binding site.

Belongs to the DNA mismatch repair MutS family.

In terms of biological role, this protein is involved in the repair of mismatches in DNA. It is possible that it carries out the mismatch recognition step. This protein has a weak ATPase activity. This chain is DNA mismatch repair protein MutS, found in Limosilactobacillus reuteri subsp. reuteri (strain JCM 1112) (Lactobacillus reuteri).